The primary structure comprises 76 residues: DNA-directed RNA polymerase subunit epsilon (76 aa).

It belongs to the RNA polymerase subunit epsilon family. As to quaternary structure, RNAP is composed of a core of 2 alpha, a beta and a beta' subunit. The core is associated with a delta subunit, and at least one of epsilon or omega. When a sigma factor is associated with the core the holoenzyme is formed, which can initiate transcription.

The enzyme catalyses RNA(n) + a ribonucleoside 5'-triphosphate = RNA(n+1) + diphosphate. Functionally, a non-essential component of RNA polymerase (RNAP). The protein is DNA-directed RNA polymerase subunit epsilon of Streptococcus pyogenes serotype M1.